The sequence spans 225 residues: Transmembrane emp24 domain-containing protein p24delta11 (225 aa).

An N-terminal signal peptide occupies residues 1-35 (MDLLPSRYKIHKTKLRWILTMMTMMMMMVMRRGES). Residues 36–193 (MRLDMESGNT…ELNRSTNSRM (158 aa)) are Lumenal-facing. The GOLD domain maps to 45–160 (TKCISDDIKT…ITMLEVEVRK (116 aa)). A coiled-coil region spans residues 175–188 (LIEREREMQELNRS). An Omega-N-methylated arginine modification is found at Arg178. Asn186 carries an N-linked (GlcNAc...) asparagine glycan. Residues 194–210 (AALSLLSFVVTMSVAGL) traverse the membrane as a helical segment. Residues 211 to 225 (QLRHLKSFLERKKLL) are Cytoplasmic-facing. The COPII vesicle coat-binding signature appears at 218–219 (FL). The short motif at 218–225 (FLERKKLL) is the COPI vesicle coat-binding element.

It belongs to the EMP24/GP25L family. As to quaternary structure, probably oligomerizes with other members of the EMP24/GP25L family. Associates with the COPI vesicle coat (coatomer). Associates with the COPII vesicle coat (coatomer).

It is found in the endoplasmic reticulum membrane. The protein localises to the golgi apparatus. It localises to the cis-Golgi network membrane. The protein resides in the golgi stack membrane. Functionally, involved in vesicular protein trafficking. Mainly functions in the early secretory pathway. Thought to act as cargo receptor at the lumenal side for incorporation of secretory cargo molecules into transport vesicles and to be involved in vesicle coat formation at the cytoplasmic side. In Arabidopsis thaliana (Mouse-ear cress), this protein is Transmembrane emp24 domain-containing protein p24delta11.